We begin with the raw amino-acid sequence, 263 residues long: Small ribosomal subunit protein uS3 (263 aa).

The region spanning 40–108 (IRNYLFKKFH…HIKVDVDVLE (69 aa)) is the KH type-2 domain. The segment at 224 to 263 (KPKGSEANHQRRNSNKSKDYRDNKNKQFNKNHQNQQPAKE) is disordered. Positions 239–248 (KSKDYRDNKN) are enriched in basic and acidic residues. Residues 249–263 (KQFNKNHQNQQPAKE) show a composition bias toward low complexity.

This sequence belongs to the universal ribosomal protein uS3 family. As to quaternary structure, part of the 30S ribosomal subunit. Forms a tight complex with proteins S10 and S14.

Binds the lower part of the 30S subunit head. Binds mRNA in the 70S ribosome, positioning it for translation. The protein is Small ribosomal subunit protein uS3 of Mycoplasmoides gallisepticum (strain R(low / passage 15 / clone 2)) (Mycoplasma gallisepticum).